We begin with the raw amino-acid sequence, 232 residues long: Protein FAM246B (232 aa).

Residues 19–31 (EVLRRVTGRRRDP) show a composition bias toward basic and acidic residues. 4 disordered regions span residues 19–47 (EVLR…RAPG), 80–101 (AAGA…VCGE), 151–179 (ALLP…GPTL), and 191–232 (AASR…GGGD). The span at 211 to 220 (APARKNHKKM) shows a compositional bias: basic residues.

This sequence belongs to the FAM246 family.

The sequence is that of Protein FAM246B from Homo sapiens (Human).